The sequence spans 455 residues: Bifunctional protein GlmU (455 aa).

A pyrophosphorylase region spans residues 1–232 (MASTTGALIL…DPNLLGVNNP (232 aa)). Residues 10–13 (LAAG), lysine 24, glutamine 75, and 80–81 (GT) contribute to the UDP-N-acetyl-alpha-D-glucosamine site. Aspartate 106 serves as a coordination point for Mg(2+). Residues glycine 141, glutamate 155, asparagine 172, and asparagine 230 each contribute to the UDP-N-acetyl-alpha-D-glucosamine site. Asparagine 230 contributes to the Mg(2+) binding site. The interval 233-253 (AELIRSEALLRTRLVIGHIEG) is linker. Residues 254-455 (GVLIHAPETV…QTNLPRKPKA (202 aa)) are N-acetyltransferase. Positions 336 and 354 each coordinate UDP-N-acetyl-alpha-D-glucosamine. Histidine 366 functions as the Proton acceptor in the catalytic mechanism. UDP-N-acetyl-alpha-D-glucosamine is bound by residues tyrosine 369 and asparagine 380. Acetyl-CoA-binding positions include alanine 383, 389–390 (NY), serine 408, alanine 426, and arginine 443.

This sequence in the N-terminal section; belongs to the N-acetylglucosamine-1-phosphate uridyltransferase family. It in the C-terminal section; belongs to the transferase hexapeptide repeat family. Homotrimer. Mg(2+) serves as cofactor.

The protein resides in the cytoplasm. It catalyses the reaction alpha-D-glucosamine 1-phosphate + acetyl-CoA = N-acetyl-alpha-D-glucosamine 1-phosphate + CoA + H(+). It carries out the reaction N-acetyl-alpha-D-glucosamine 1-phosphate + UTP + H(+) = UDP-N-acetyl-alpha-D-glucosamine + diphosphate. It participates in nucleotide-sugar biosynthesis; UDP-N-acetyl-alpha-D-glucosamine biosynthesis; N-acetyl-alpha-D-glucosamine 1-phosphate from alpha-D-glucosamine 6-phosphate (route II): step 2/2. Its pathway is nucleotide-sugar biosynthesis; UDP-N-acetyl-alpha-D-glucosamine biosynthesis; UDP-N-acetyl-alpha-D-glucosamine from N-acetyl-alpha-D-glucosamine 1-phosphate: step 1/1. The protein operates within bacterial outer membrane biogenesis; LPS lipid A biosynthesis. Catalyzes the last two sequential reactions in the de novo biosynthetic pathway for UDP-N-acetylglucosamine (UDP-GlcNAc). The C-terminal domain catalyzes the transfer of acetyl group from acetyl coenzyme A to glucosamine-1-phosphate (GlcN-1-P) to produce N-acetylglucosamine-1-phosphate (GlcNAc-1-P), which is converted into UDP-GlcNAc by the transfer of uridine 5-monophosphate (from uridine 5-triphosphate), a reaction catalyzed by the N-terminal domain. This chain is Bifunctional protein GlmU, found in Nitratidesulfovibrio vulgaris (strain ATCC 29579 / DSM 644 / CCUG 34227 / NCIMB 8303 / VKM B-1760 / Hildenborough) (Desulfovibrio vulgaris).